A 750-amino-acid polypeptide reads, in one-letter code: Probable methylmalonyl-CoA mutase large subunit (750 aa).

Residues tyrosine 91, methionine 94, threonine 101, arginine 103, tyrosine 105, and serine 130 each contribute to the (R)-methylmalonyl-CoA site. Cob(II)alamin contacts are provided by phenylalanine 133 and alanine 155. (R)-methylmalonyl-CoA-binding residues include threonine 211 and glutamine 213. Cob(II)alamin is bound by residues valine 222 and arginine 223. The (R)-methylmalonyl-CoA site is built by arginine 223, histidine 260, arginine 299, and serine 301. 11 residues coordinate cob(II)alamin: glycine 349, glutamate 386, alanine 389, glycine 628, histidine 629, aspartate 630, arginine 631, serine 674, leucine 676, glycine 705, and threonine 728. Positions 616 to 748 constitute a B12-binding domain; the sequence is RPRILIAKMG…HRLAERLGYT (133 aa).

Belongs to the methylmalonyl-CoA mutase family. Heterodimer of an alpha and a beta chain. Adenosylcob(III)alamin serves as cofactor.

The enzyme catalyses (R)-methylmalonyl-CoA = succinyl-CoA. It participates in metabolic intermediate metabolism; propanoyl-CoA degradation; succinyl-CoA from propanoyl-CoA: step 3/3. Catalyzes the isomerization of succinyl-CoA to methylmalonyl-CoA during synthesis of propionate from tricarboxylic acid-cycle intermediates. The polypeptide is Probable methylmalonyl-CoA mutase large subunit (mutB) (Mycobacterium bovis (strain ATCC BAA-935 / AF2122/97)).